The primary structure comprises 375 residues: tRNA-specific 2-thiouridylase MnmA (375 aa).

Residues 12-19 (GMSGGVDS) and Met38 each bind ATP. The segment at 98–100 (NPD) is interaction with target base in tRNA. Cys103 acts as the Nucleophile in catalysis. Cysteines 103 and 200 form a disulfide. Residue Gly127 coordinates ATP. Residues 150–152 (KDQ) form an interaction with tRNA region. The active-site Cysteine persulfide intermediate is the Cys200. Residues 312–313 (RY) are interaction with tRNA.

Belongs to the MnmA/TRMU family.

The protein localises to the cytoplasm. The enzyme catalyses S-sulfanyl-L-cysteinyl-[protein] + uridine(34) in tRNA + AH2 + ATP = 2-thiouridine(34) in tRNA + L-cysteinyl-[protein] + A + AMP + diphosphate + H(+). Catalyzes the 2-thiolation of uridine at the wobble position (U34) of tRNA, leading to the formation of s(2)U34. This is tRNA-specific 2-thiouridylase MnmA from Lactobacillus delbrueckii subsp. bulgaricus (strain ATCC BAA-365 / Lb-18).